Consider the following 162-residue polypeptide: Cyclic pyranopterin monophosphate synthase (162 aa).

Substrate is bound by residues 75–77 (MCH) and 115–116 (ME). Residue D130 is part of the active site.

The protein belongs to the MoaC family. Homohexamer; trimer of dimers.

It carries out the reaction (8S)-3',8-cyclo-7,8-dihydroguanosine 5'-triphosphate = cyclic pyranopterin phosphate + diphosphate. It participates in cofactor biosynthesis; molybdopterin biosynthesis. In terms of biological role, catalyzes the conversion of (8S)-3',8-cyclo-7,8-dihydroguanosine 5'-triphosphate to cyclic pyranopterin monophosphate (cPMP). The polypeptide is Cyclic pyranopterin monophosphate synthase (Geobacillus kaustophilus (strain HTA426)).